The chain runs to 156 residues: Cyanate hydratase (156 aa).

Catalysis depends on residues Arg96, Glu99, and Ser122.

This sequence belongs to the cyanase family.

It catalyses the reaction cyanate + hydrogencarbonate + 3 H(+) = NH4(+) + 2 CO2. Functionally, catalyzes the reaction of cyanate with bicarbonate to produce ammonia and carbon dioxide. The chain is Cyanate hydratase from Burkholderia pseudomallei (strain 1106a).